Reading from the N-terminus, the 2028-residue chain is Phosphatidylinositol 4-kinase alpha 1 (2028 aa).

Residues 184–241 (PASPKEQRQQNSANSETDTSSSQGSPISTNRYPSGKTEMASPGDEVASHGSNLSSKSS) are disordered. Positions 192 to 215 (QQNSANSETDTSSSQGSPISTNRY) are enriched in polar residues. The segment covering 231–241 (SHGSNLSSKSS) has biased composition (low complexity). The PIK helical domain occupies 1483–1659 (TEYAKTAFSV…NAAFQEILPQ (177 aa)). The tract at residues 1660 to 1773 (VRQHIIDGFS…VKPQACIFKV (114 aa)) is pleckstrin homology (PH) domain conferring phosphoinositide binding specificity. The region spanning 1734-2012 (VDSGIPLQSA…VCTDAYNKWT (279 aa)) is the PI3K/PI4K catalytic domain. The tract at residues 1740-1746 (LQSAAKV) is G-loop. The catalytic loop stretch occupies residues 1876-1884 (QPKDRHNGN). The segment at 1895–1920 (HIDFGFILETSPGGNMRFESAHFKLS) is activation loop.

Belongs to the PI3/PI4-kinase family. Type III PI4K subfamily. Interacts in vitro with actin filaments via its PH domain. Present in leaves and inflorescences.

It localises to the membrane. Its subcellular location is the cytoplasm. The protein localises to the perinuclear region. It carries out the reaction a 1,2-diacyl-sn-glycero-3-phospho-(1D-myo-inositol) + ATP = a 1,2-diacyl-sn-glycero-3-phospho-(1D-myo-inositol 4-phosphate) + ADP + H(+). Its activity is regulated as follows. Repressed by PtdIns4P, adenosine and wortmannin, but stimulated by other negatively charged lipids such as PtdIns3P, PtdOH, and phosphatidyl-serine (PtdSer). Functionally, acts on phosphatidylinositol (PtdIns) in the first committed step in the production of the second messenger inositol-1,4,5,-trisphosphate. Can bind to phosphatidylinositol 4-monophosphate (PI-4-P or PtdIns4P), phosphatidylinositol 4,5-bisphosphate (PI-4,5-P2 or PtdIns4,5P2), and phosphatidic acid (PtdOH), but not to 3-phosphoinositides. May function upstream of the cold response phosphoinositide-dependent phospholipase C (PI-PLC) pathway. In Arabidopsis thaliana (Mouse-ear cress), this protein is Phosphatidylinositol 4-kinase alpha 1.